Reading from the N-terminus, the 319-residue chain is Cytochrome f (319 aa).

An N-terminal signal peptide occupies residues 1–34 (MQNRNTYDLKKKMTRLISVLVMIHIITRTSISNA). Y35, C55, C58, and H59 together coordinate heme. Residues 285-304 (VKGLLLFLASVILAQIFLVL) traverse the membrane as a helical segment.

The protein belongs to the cytochrome f family. In terms of assembly, the 4 large subunits of the cytochrome b6-f complex are cytochrome b6, subunit IV (17 kDa polypeptide, petD), cytochrome f and the Rieske protein, while the 4 small subunits are PetG, PetL, PetM and PetN. The complex functions as a dimer. Heme serves as cofactor.

It localises to the plastid. The protein localises to the chloroplast thylakoid membrane. Functionally, component of the cytochrome b6-f complex, which mediates electron transfer between photosystem II (PSII) and photosystem I (PSI), cyclic electron flow around PSI, and state transitions. The polypeptide is Cytochrome f (petA) (Picea abies (Norway spruce)).